A 706-amino-acid chain; its full sequence is Envelope glycoprotein H (706 aa).

Residues 1–18 (MQLLCVFCLVLLWEVGAA) form the signal peptide. Topologically, residues 19-682 (SLSEVKLHLD…LYEERAHVVL (664 aa)) are virion surface. N-linked (GlcNAc...) asparagine; by host glycosylation is present at Asn-60. Positions 165–229 (DKFQYTGAMT…QSGDYSLVIV (65 aa)) are interaction with gL. An intrachain disulfide couples Cys-278 to Cys-335. A glycan (N-linked (GlcNAc...) asparagine; by host) is linked at Asn-435. 2 disulfide bridges follow: Cys-454–Cys-478 and Cys-534–Cys-587. N-linked (GlcNAc...) asparagine; by host glycosylation is found at Asn-549 and Asn-604. Cys-612 and Cys-615 are joined by a disulfide. An N-linked (GlcNAc...) asparagine; by host glycan is attached at Asn-664. Residues 683–703 (AIILYFIAFALGIFLVHKIVM) form a helical membrane-spanning segment. Residues 704-706 (FFL) lie on the Intravirion side of the membrane.

Belongs to the herpesviridae glycoprotein H family. As to quaternary structure, interacts with glycoprotein L (gL); this interaction is necessary for the correct processing and cell surface expression of gH. The heterodimer gH/gL seems to interact with gB trimers during fusion. The heterodimer gH/gL interacts with host EPHA2 to facilitate virus internalization and fusion. Interacts with glycoprotein 42/BZLF2. In terms of processing, N-glycosylated, O-glycosylated, and sialylated.

The protein localises to the virion membrane. The protein resides in the host cell membrane. Its subcellular location is the host endosome membrane. The heterodimer glycoprotein H-glycoprotein L is required for the fusion of viral and plasma membranes leading to virus entry into the host cell. Following initial binding to host receptor, membrane fusion is mediated by the fusion machinery composed of gB and the heterodimer gH/gL. May also be involved in the fusion between the virion envelope and the outer nuclear membrane during virion morphogenesis. The heterodimer gH/gL targets also host EPHA2 to promote viral entry. The chain is Envelope glycoprotein H from Homo sapiens (Human).